A 134-amino-acid chain; its full sequence is ATP synthase epsilon chain (134 aa).

This sequence belongs to the ATPase epsilon chain family. As to quaternary structure, F-type ATPases have 2 components, CF(1) - the catalytic core - and CF(0) - the membrane proton channel. CF(1) has five subunits: alpha(3), beta(3), gamma(1), delta(1), epsilon(1). CF(0) has three main subunits: a, b and c.

It localises to the cell inner membrane. Functionally, produces ATP from ADP in the presence of a proton gradient across the membrane. This is ATP synthase epsilon chain from Rhizobium meliloti (strain 1021) (Ensifer meliloti).